The chain runs to 728 residues: Probable ubiquitin-conjugating enzyme protein 17 (728 aa).

Low complexity predominate over residues 1 to 17 (MSSQASQRSSSTSAVAQ). Disordered regions lie at residues 1–23 (MSSQASQRSSSTSAVAQKTRERR) and 123–155 (SSRSADEQKRRARRNSSASLSHKGTGYGTGSTR). A UBC core domain is found at 402–568 (DRTKRIAKEL…IEHATLNYAI (167 aa)). Catalysis depends on C495, which acts as the Glycyl thioester intermediate. Disordered regions lie at residues 649 to 678 (PFAKEEAEESERLKREQSEKEEKQKKEAAA) and 709 to 728 (RTQPTGDYSVPSVNEPSTSS). Residues 658–678 (SERLKREQSEKEEKQKKEAAA) are compositionally biased toward basic and acidic residues. The segment covering 710–728 (TQPTGDYSVPSVNEPSTSS) has biased composition (polar residues).

The protein belongs to the ubiquitin-conjugating enzyme family.

This is Probable ubiquitin-conjugating enzyme protein 17 (ubc-17) from Caenorhabditis elegans.